Here is a 190-residue protein sequence, read N- to C-terminus: Small ribosomal subunit protein mS23 (190 aa).

A2 is subject to N-acetylalanine. K83 carries the post-translational modification N6-succinyllysine. N6-acetyllysine is present on K102. Residues 137-190 form a disordered region; the sequence is KARTQQEGSQVSRKSESMGVESQTALEENPPLKEVPQAQHLESPGEESKGLSPP.

The protein belongs to the mitochondrion-specific ribosomal protein mS23 family. In terms of assembly, component of the mitochondrial ribosome small subunit (28S) which comprises a 12S rRNA and about 30 distinct proteins.

The protein resides in the mitochondrion. This is Small ribosomal subunit protein mS23 from Bos taurus (Bovine).